A 994-amino-acid polypeptide reads, in one-letter code: Bifunctional glutamine synthetase adenylyltransferase/adenylyl-removing enzyme (994 aa).

The adenylyl removase stretch occupies residues 1–487 (MVVTKLATQR…LHTKLFYQPL (487 aa)). Residues 492–994 (GPTGLEIAHG…KAVVRKVFGS (503 aa)) form an adenylyl transferase region.

It belongs to the GlnE family. Requires Mg(2+) as cofactor.

The catalysed reaction is [glutamine synthetase]-O(4)-(5'-adenylyl)-L-tyrosine + phosphate = [glutamine synthetase]-L-tyrosine + ADP. It carries out the reaction [glutamine synthetase]-L-tyrosine + ATP = [glutamine synthetase]-O(4)-(5'-adenylyl)-L-tyrosine + diphosphate. Its function is as follows. Involved in the regulation of glutamine synthetase GlnA, a key enzyme in the process to assimilate ammonia. When cellular nitrogen levels are high, the C-terminal adenylyl transferase (AT) inactivates GlnA by covalent transfer of an adenylyl group from ATP to specific tyrosine residue of GlnA, thus reducing its activity. Conversely, when nitrogen levels are low, the N-terminal adenylyl removase (AR) activates GlnA by removing the adenylyl group by phosphorolysis, increasing its activity. The regulatory region of GlnE binds the signal transduction protein PII (GlnB) which indicates the nitrogen status of the cell. This Mycobacterium bovis (strain ATCC BAA-935 / AF2122/97) protein is Bifunctional glutamine synthetase adenylyltransferase/adenylyl-removing enzyme.